The primary structure comprises 286 residues: tRNA (guanine-N(7)-)-methyltransferase (286 aa).

Residues 1–22 are disordered; that stretch reads MGRARPKSQKRGDYRVSRSQEN. S-adenosyl-L-methionine-binding positions include glycine 104, 127–128, 162–163, and cysteine 182; these read EI and NS. Residue aspartate 185 is part of the active site. Residue 260–262 coordinates S-adenosyl-L-methionine; the sequence is TEE.

It belongs to the class I-like SAM-binding methyltransferase superfamily. TrmB family. As to quaternary structure, forms a complex with TRM82.

The protein localises to the nucleus. It catalyses the reaction guanosine(46) in tRNA + S-adenosyl-L-methionine = N(7)-methylguanosine(46) in tRNA + S-adenosyl-L-homocysteine. It participates in tRNA modification; N(7)-methylguanine-tRNA biosynthesis. Catalyzes the formation of N(7)-methylguanine at position 46 (m7G46) in tRNA. The chain is tRNA (guanine-N(7)-)-methyltransferase from Colletotrichum orbiculare (strain 104-T / ATCC 96160 / CBS 514.97 / LARS 414 / MAFF 240422) (Cucumber anthracnose fungus).